Reading from the N-terminus, the 211-residue chain is Adenylate kinase (211 aa).

Residue 10-15 (GSGKGT) participates in ATP binding. The interval 30-59 (STGDMLRAEVSKKSPLGLKAEEYMKQGLLV) is NMP. Residues threonine 31, arginine 36, 57-59 (LLV), 84-87 (GFPR), and glutamine 91 each bind AMP. Positions 125-162 (GRRVCPKCGATYNIYYQKPKNDTLCDNDATPLIQRDDD) are LID. Arginine 126 lines the ATP pocket. 2 residues coordinate Zn(2+): cysteine 129 and cysteine 132. 135–136 (TY) serves as a coordination point for ATP. Cysteine 149 and aspartate 152 together coordinate Zn(2+). Positions 159 and 170 each coordinate AMP. Glycine 198 is a binding site for ATP.

The protein belongs to the adenylate kinase family. As to quaternary structure, monomer.

It localises to the cytoplasm. It catalyses the reaction AMP + ATP = 2 ADP. The protein operates within purine metabolism; AMP biosynthesis via salvage pathway; AMP from ADP: step 1/1. In terms of biological role, catalyzes the reversible transfer of the terminal phosphate group between ATP and AMP. Plays an important role in cellular energy homeostasis and in adenine nucleotide metabolism. This is Adenylate kinase from Hydrogenobaculum sp. (strain Y04AAS1).